Consider the following 204-residue polypeptide: MAEGPSLHPKLQVDSNIPIEISSQIPQEPARNLAFQMRQSPLVTPGSTTKSSLSVPERNLLKQESQGPSRQSGCMLLSDKYVNKQTGPMASRKFRKERTVYTKEQQGLLQKHFDECQYPNKKKIVELALSVGVTKREIKIWFKNNRAKYRRMNLQNIEQVLPESNGSSKAVSESTHFPVVASDNGESMCSGTFGEDSIPKFNCS.

A disordered region spans residues 28-73; the sequence is EPARNLAFQMRQSPLVTPGSTTKSSLSVPERNLLKQESQGPSRQSG. 2 stretches are compositionally biased toward polar residues: residues 37–54 and 62–72; these read MRQS…SSLS and KQESQGPSRQS. The homeobox DNA-binding region spans 94–153; it reads FRKERTVYTKEQQGLLQKHFDECQYPNKKKIVELALSVGVTKREIKIWFKNNRAKYRRMN.

It belongs to the paired homeobox family. Obox subfamily. As to expression, specifically expressed in oocytes and early embryos.

The protein resides in the nucleus. In terms of biological role, transcription factor required for zygotic genome activation (ZGA), a critical event in early embryonic development during which the developmental control passes from maternally provided mRNAs to the expression of the zygotic genome after fertilization. Together with other Obox family members, required in early two-cell stage embryos to kick-start the major ZGA wave by facilitating RNA Polymerase II 'pre-configuration', during which RNA Polymerase II relocates from the initial one-cell stage binding targets to ZGA gene promoters and distal enhancers. Mechanistically, promotes recruitment of RNA Polymerase II from (CG-rich) non-ZGA genes to (CG-poor) ZGA genes at the two-cell stage. Binds to regulatory DNA sequences containing a 5'-ACNCCTTTAATCCCAG-3' sequence motif. Most maternal and zygotic Obox family proteins can compensate for one another. In addition to its role in ZGA, promotes embryonic stem cell pluripotency. The sequence is that of Oocyte-specific homeobox protein 1 from Mus musculus (Mouse).